We begin with the raw amino-acid sequence, 156 residues long: Small ribosomal subunit protein uS7 (156 aa).

The protein belongs to the universal ribosomal protein uS7 family. As to quaternary structure, part of the 30S ribosomal subunit. Contacts proteins S9 and S11.

Functionally, one of the primary rRNA binding proteins, it binds directly to 16S rRNA where it nucleates assembly of the head domain of the 30S subunit. Is located at the subunit interface close to the decoding center, probably blocks exit of the E-site tRNA. The sequence is that of Small ribosomal subunit protein uS7 from Gemmatimonas aurantiaca (strain DSM 14586 / JCM 11422 / NBRC 100505 / T-27).